Reading from the N-terminus, the 121-residue chain is MDPAHHIKDTSAELLSQQDFSILQSRLLEFLASQEARETVTASKELTLLRQGIRQLKEKVSKMEPEEMTVKEKKSIIEILKARIALKKAFLKMALSESNDTVVKKEDVRESPVDTFMENAT.

A disordered region spans residues 101–121 (TVVKKEDVRESPVDTFMENAT). Residues 102–112 (VVKKEDVRESP) are compositionally biased toward basic and acidic residues.

This is an uncharacterized protein from Schizosaccharomyces pombe (strain 972 / ATCC 24843) (Fission yeast).